A 430-amino-acid chain; its full sequence is Tol-Pal system protein TolB (430 aa).

An N-terminal signal peptide occupies residues methionine 1–alanine 21.

Belongs to the TolB family. The Tol-Pal system is composed of five core proteins: the inner membrane proteins TolA, TolQ and TolR, the periplasmic protein TolB and the outer membrane protein Pal. They form a network linking the inner and outer membranes and the peptidoglycan layer.

The protein resides in the periplasm. In terms of biological role, part of the Tol-Pal system, which plays a role in outer membrane invagination during cell division and is important for maintaining outer membrane integrity. TolB occupies a key intermediary position in the Tol-Pal system because it communicates directly with both membrane-embedded components, Pal in the outer membrane and TolA in the inner membrane. In Yersinia enterocolitica serotype O:8 / biotype 1B (strain NCTC 13174 / 8081), this protein is Tol-Pal system protein TolB.